A 504-amino-acid polypeptide reads, in one-letter code: Maturase K (504 aa).

The protein belongs to the intron maturase 2 family. MatK subfamily.

It is found in the plastid. Its subcellular location is the chloroplast. Functionally, usually encoded in the trnK tRNA gene intron. Probably assists in splicing its own and other chloroplast group II introns. The protein is Maturase K of Quercus rubra (Northern red oak).